A 112-amino-acid polypeptide reads, in one-letter code: Putative membrane protein insertion efficiency factor (112 aa).

It belongs to the UPF0161 family.

Its subcellular location is the cell inner membrane. Its function is as follows. Could be involved in insertion of integral membrane proteins into the membrane. The protein is Putative membrane protein insertion efficiency factor of Bradyrhizobium diazoefficiens (strain JCM 10833 / BCRC 13528 / IAM 13628 / NBRC 14792 / USDA 110).